The following is a 354-amino-acid chain: MTEATQAQPAVPRLTSLSHGGGCGCKIAPGVLSELLKRATPPALFPDLLVGTETSDDAAVYRLNDEQAIVATTDFFMPIVDDPFDFGRIAATNALSDVYAMGGKPILALALVGMPINVLPHETIAAVLRGGESVCADAGIPVAGGHSIDSVEPIYGLAAIGVVHPSRVKRNAAARAGDVLVLGKPLGVGVLSAALKKNQLDADGYAQMVATTTKLNRPGAELAALPGVHALTDVTGFGLLGHTLELARGAQLTARVHYASLPWLAGVETFVADGVFTGASGRNWAAYGTDVRLADGLPPVAQALLTDPQTSGGLLVACAPEAVDDVLACFRADGFDRAAVIGEMVDGPARVDVA.

Cys-23 is a catalytic residue. Residues Lys-26 and Thr-54–Asp-56 contribute to the ATP site. Asp-57 is a Mg(2+) binding site. ATP contacts are provided by residues Asp-74, Asp-97, and Gly-145–Ser-147. Asp-97 is a Mg(2+) binding site. Residue Asp-233 coordinates Mg(2+).

The protein belongs to the selenophosphate synthase 1 family. Class I subfamily. In terms of assembly, homodimer. It depends on Mg(2+) as a cofactor.

It carries out the reaction hydrogenselenide + ATP + H2O = selenophosphate + AMP + phosphate + 2 H(+). Functionally, synthesizes selenophosphate from selenide and ATP. The chain is Selenide, water dikinase from Burkholderia orbicola (strain MC0-3).